The primary structure comprises 269 residues: MTHLERSRHQQHPFHMVMPSPWPIVVSFALLSLALSTALTMHGYIGNMNMVYLALFVLLTSSILWFRDIVAEATYLGDHTMAVRKGINLGFLMFVLSEVLIFAGLFWAYFHSAMSPDVTLGACWPPVGIEAVQPTELPLLNTIILLSSGATVTYSHHALIAGNRNKALSGLLITFWLIVIFVTCQYIEYTNAAFTISDGVYGSVFYAGTGLHFLHMVMLAAMLGVNYWRMRNYHLTAGHHVGYETTIIYTHVLDVIWLFLYVVFYWWGV.

The Mitochondrial matrix portion of the chain corresponds to 1-22; it reads MTHLERSRHQQHPFHMVMPSPW. The helical transmembrane segment at 23-41 threads the bilayer; it reads PIVVSFALLSLALSTALTM. The Mitochondrial intermembrane segment spans residues 42-48; that stretch reads HGYIGNM. The helical transmembrane segment at 49-73 threads the bilayer; sequence NMVYLALFVLLTSSILWFRDIVAEA. Residues 74-80 lie on the Mitochondrial matrix side of the membrane; sequence TYLGDHT. A helical membrane pass occupies residues 81 to 114; that stretch reads MAVRKGINLGFLMFVLSEVLIFAGLFWAYFHSAM. The Mitochondrial intermembrane segment spans residues 115 to 137; that stretch reads SPDVTLGACWPPVGIEAVQPTEL. The chain crosses the membrane as a helical span at residues 138 to 161; that stretch reads PLLNTIILLSSGATVTYSHHALIA. Over 162-164 the chain is Mitochondrial matrix; that stretch reads GNR. The helical transmembrane segment at 165–188 threads the bilayer; it reads NKALSGLLITFWLIVIFVTCQYIE. Residues 189–201 are Mitochondrial intermembrane-facing; sequence YTNAAFTISDGVY. The helical transmembrane segment at 202 to 230 threads the bilayer; that stretch reads GSVFYAGTGLHFLHMVMLAAMLGVNYWRM. Residues 231-248 are Mitochondrial matrix-facing; the sequence is RNYHLTAGHHVGYETTII. A helical transmembrane segment spans residues 249 to 265; that stretch reads YTHVLDVIWLFLYVVFY. Residues 266-269 are Mitochondrial intermembrane-facing; the sequence is WWGV.

Belongs to the cytochrome c oxidase subunit 3 family. As to quaternary structure, component of the cytochrome c oxidase (complex IV, CIV), a multisubunit enzyme composed of 12 subunits. The complex is composed of a catalytic core of 3 subunits COX1, COX2 and COX3, encoded in the mitochondrial DNA, and 9 supernumerary subunits COX4, COX5A (or COX5B), COX6, COX7, COX8, COX9, COX12, COX13 and COX26, which are encoded in the nuclear genome. The complex exists as a monomer or a dimer and forms supercomplexes (SCs) in the inner mitochondrial membrane with a dimer of ubiquinol-cytochrome c oxidoreductase (cytochrome b-c1 complex, complex III, CIII), resulting in 2 different assemblies (supercomplexes III(2)IV and III(2)IV(2)). In terms of processing, the N-terminus is blocked.

The protein resides in the mitochondrion inner membrane. The catalysed reaction is 4 Fe(II)-[cytochrome c] + O2 + 8 H(+)(in) = 4 Fe(III)-[cytochrome c] + 2 H2O + 4 H(+)(out). In terms of biological role, component of the cytochrome c oxidase, the last enzyme in the mitochondrial electron transport chain which drives oxidative phosphorylation. The respiratory chain contains 3 multisubunit complexes succinate dehydrogenase (complex II, CII), ubiquinol-cytochrome c oxidoreductase (cytochrome b-c1 complex, complex III, CIII) and cytochrome c oxidase (complex IV, CIV), that cooperate to transfer electrons derived from NADH and succinate to molecular oxygen, creating an electrochemical gradient over the inner membrane that drives transmembrane transport and the ATP synthase. Cytochrome c oxidase is the component of the respiratory chain that catalyzes the reduction of oxygen to water. Electrons originating from reduced cytochrome c in the intermembrane space (IMS) are transferred via the dinuclear copper A center (CU(A)) of COX2 and heme A of COX1 to the active site in COX1, a binuclear center (BNC) formed by heme A3 and copper B (CU(B)). The BNC reduces molecular oxygen to 2 water molecules using 4 electrons from cytochrome c in the IMS and 4 protons from the mitochondrial matrix. COX3 is a catalytic core subunit. This Saccharomyces cerevisiae (strain ATCC 204508 / S288c) (Baker's yeast) protein is Cytochrome c oxidase subunit 3 (COX3).